A 440-amino-acid polypeptide reads, in one-letter code: Gamma-aminobutyric acid receptor subunit pi (440 aa).

A signal peptide spans Met-1–Gly-23. Over Asn-24–Asn-241 the chain is Extracellular. Residues Asn-43, Asn-102, and Asn-145 are each glycosylated (N-linked (GlcNAc...) asparagine). The cysteines at positions 160 and 174 are disulfide-linked. N-linked (GlcNAc...) asparagine glycosylation is found at Asn-196 and Asn-228. The helical transmembrane segment at Val-242–Val-262 threads the bilayer. The Cytoplasmic portion of the chain corresponds to Ser-263 to Ser-270. The helical transmembrane segment at Val-271–Ile-290 threads the bilayer. Over Gly-291–Cys-301 the chain is Extracellular. Residues Phe-302–Leu-322 form a helical membrane-spanning segment. Residues Glu-323–Lys-419 lie on the Cytoplasmic side of the membrane. The helical transmembrane segment at Leu-420–Phe-440 threads the bilayer.

This sequence belongs to the ligand-gated ion channel (TC 1.A.9) family. Gamma-aminobutyric acid receptor (TC 1.A.9.5) subfamily. GABRP sub-subfamily. Heteropentamer, formed by a combination of alpha (GABRA1-6), beta (GABRB1-3), gamma (GABRG1-3), delta (GABRD), epsilon (GABRE), rho (GABRR1-3), pi (GABRP) and theta (GABRQ) chains, each subunit exhibiting distinct physiological and pharmacological properties.

The protein resides in the cell membrane. Its subcellular location is the apical cell membrane. The catalysed reaction is chloride(in) = chloride(out). Pi subunit of the heteropentameric ligand-gated chloride channel gated by gamma-aminobutyric acid (GABA). GABA-gated chloride channels, also named GABA(A) receptors (GABAAR), consist of five subunits arranged around a central pore and contain GABA active binding site(s) located at the alpha and beta subunit interfaces. When activated by GABA, GABAARs selectively allow the flow of chloride anions across the cell membrane down their electrochemical gradient. Pi-containing GABAARs are mostly located in peripheral tissues. In the uterus, pi subunits modulate uterus contraction by altering the sensitivity of GABAARs to pregnanolone. In the lungs, pi-containing GABAARs contribute to pulmonary fluid transport via luminal secretion of chloride. In Mus musculus (Mouse), this protein is Gamma-aminobutyric acid receptor subunit pi.